Consider the following 246-residue polypeptide: Eukaryotic translation initiation factor 6 (246 aa).

Ser174 and Ser175 each carry phosphoserine; by CK1.

Belongs to the eIF-6 family. In terms of assembly, monomer. Associates with the 60S ribosomal subunit. In terms of processing, phosphorylation at Ser-174 and Ser-175 promotes nuclear export.

Its subcellular location is the cytoplasm. The protein localises to the nucleus. It localises to the nucleolus. Functionally, binds to the 60S ribosomal subunit and prevents its association with the 40S ribosomal subunit to form the 80S initiation complex in the cytoplasm. Is also involved in ribosome biogenesis. Associates with pre-60S subunits in the nucleus and is involved in its nuclear export. The sequence is that of Eukaryotic translation initiation factor 6 from Sordaria macrospora (strain ATCC MYA-333 / DSM 997 / K(L3346) / K-hell).